The sequence spans 504 residues: uncharacterized protein (504 aa).

The propeptide occupies 1-212; that stretch reads MFMKSKAAGS…LYKTQDPVLD (212 aa).

This is an uncharacterized protein from Deinococcus radiodurans (strain ATCC 13939 / DSM 20539 / JCM 16871 / CCUG 27074 / LMG 4051 / NBRC 15346 / NCIMB 9279 / VKM B-1422 / R1).